Reading from the N-terminus, the 318-residue chain is Death effector domain-containing protein (318 aa).

Residues 25-103 form the DED domain; sequence SLHRMFDIVG…RHDLLPYVTL (79 aa). The tract at residues 128–191 is disordered; it reads PRALSDPEPR…SVTPDPKEKQ (64 aa).

As to quaternary structure, interacts with CASP8, CASP10, KRT8, KRT18, CASP3 and FADD. Homodimerizes and heterodimerizes with DEDD2. Exists predominantly in a mono- or diubiquitinated form. In terms of tissue distribution, widely expressed with highest levels in testis. Within the testis, highly expressed in germ cells but not expressed in Sertoli cells.

It localises to the cytoplasm. The protein localises to the nucleus. It is found in the nucleolus. Its function is as follows. A scaffold protein that directs CASP3 to certain substrates and facilitates their ordered degradation during apoptosis. May also play a role in mediating CASP3 cleavage of KRT18. Regulates degradation of intermediate filaments during apoptosis. May play a role in the general transcription machinery in the nucleus and might be an important regulator of the activity of GTF3C3. Inhibits DNA transcription in vitro. This Rattus norvegicus (Rat) protein is Death effector domain-containing protein (Dedd).